Here is an 861-residue protein sequence, read N- to C-terminus: Homeobox-leucine zipper protein HOX29 (861 aa).

Residues 2-65 (DASKYVRYTP…NRRCREKQRK (64 aa)) constitute a DNA-binding region (homeobox). A coiled-coil region spans residues 57–99 (RRCREKQRKESSRLQALNRKLTAMNKLLMEENDRLQKQVSQLV). One can recognise an START domain in the interval 162 to 390 (RDASPAGLMS…VAHEDTRSVI (229 aa)).

It belongs to the HD-ZIP homeobox family. Class III subfamily. In terms of tissue distribution, expressed in roots, stems and leaf blades.

It is found in the nucleus. In terms of biological role, probable transcription factor. This chain is Homeobox-leucine zipper protein HOX29 (HOX29), found in Oryza sativa subsp. indica (Rice).